The following is a 248-amino-acid chain: Proteasome subunit alpha (248 aa).

This sequence belongs to the peptidase T1A family. In terms of assembly, the 20S proteasome core is composed of 14 alpha and 14 beta subunits that assemble into four stacked heptameric rings, resulting in a barrel-shaped structure. The two inner rings, each composed of seven catalytic beta subunits, are sandwiched by two outer rings, each composed of seven alpha subunits. The catalytic chamber with the active sites is on the inside of the barrel. Has a gated structure, the ends of the cylinder being occluded by the N-termini of the alpha-subunits. Is capped by the proteasome-associated ATPase, ARC.

The protein localises to the cytoplasm. The protein operates within protein degradation; proteasomal Pup-dependent pathway. The formation of the proteasomal ATPase ARC-20S proteasome complex, likely via the docking of the C-termini of ARC into the intersubunit pockets in the alpha-rings, may trigger opening of the gate for substrate entry. Interconversion between the open-gate and close-gate conformations leads to a dynamic regulation of the 20S proteasome proteolysis activity. Its function is as follows. Component of the proteasome core, a large protease complex with broad specificity involved in protein degradation. The chain is Proteasome subunit alpha from Mycobacterium tuberculosis (strain ATCC 25177 / H37Ra).